The chain runs to 155 residues: MRCPFCGNIDTQVKDSRPAEDHVSIRRRRFCPACGGRFTTYERVQLRDLVVIKSSGKREDFDRTKLERSIRIAMQKRPIEPERIDQMISGIVRRLESLGDTDIPSKVIGEIVMESLARIDTVAYVRFASVYKNFQAADDFDKFVSELRPTAPAEE.

A zinc finger spans residues 3 to 34 (CPFCGNIDTQVKDSRPAEDHVSIRRRRFCPAC). One can recognise an ATP-cone domain in the interval 49-139 (LVVIKSSGKR…VYKNFQAADD (91 aa)).

The protein belongs to the NrdR family. The cofactor is Zn(2+).

Functionally, negatively regulates transcription of bacterial ribonucleotide reductase nrd genes and operons by binding to NrdR-boxes. The protein is Transcriptional repressor NrdR of Cereibacter sphaeroides (strain ATCC 17025 / ATH 2.4.3) (Rhodobacter sphaeroides).